A 1704-amino-acid chain; its full sequence is Villidin (1704 aa).

4 WD repeats span residues 82–122, 133–173, 180–221, and 225–271; these read GHTD…LIKD, KQQK…EQSS, GHED…TPIQ, and THEG…SSQP. Disordered regions lie at residues 439-460 and 606-721; these read IGNS…DSPF and SVPS…NSST. The segment covering 442–456 has biased composition (gly residues); that stretch reads SGSGGGGGDGDGNGG. The 105-residue stretch at 459–563 folds into the PH 1 domain; sequence PFITEGIVKQ…WCQSINAYRE (105 aa). Composition is skewed to low complexity over residues 613–636, 651–701, and 709–721; these read QQQQ…TPTQ, SLKS…SSSS, and NNST…NSST. PH domains are found at residues 727–828 and 871–969; these read DIVI…QNLK and EQPL…AARK. The interval 848–877 is disordered; it reads LISSPMSDDESNTNEGGVEEEEEEQPLEGQ. Acidic residues predominate over residues 854–873; sequence SDDESNTNEGGVEEEEEEQP. Gelsolin-like repeat units lie at residues 1025-1119, 1138-1241, 1293-1390, 1404-1494, and 1520-1615; these read KQKI…LGGN, IKTT…FANY, GRVK…FKTK, KKPS…FEST, and RFFV…FRAW. The HP domain occupies 1641 to 1704; that stretch reads DYLKEIYTYE…EGIKKELFLF (64 aa).

The protein localises to the membrane. It localises to the cytoplasm. Its subcellular location is the cytoskeleton. Its function is as follows. May function as a linker between membranes and the actin cytoskeleton. The protein is Villidin (vilA) of Dictyostelium discoideum (Social amoeba).